Here is a 245-residue protein sequence, read N- to C-terminus: Ribosomal RNA small subunit methyltransferase G (245 aa).

Residues glycine 90, leucine 95, 140–141 (AE), and arginine 158 contribute to the S-adenosyl-L-methionine site. The interval 223–245 (VVSARRAKPPHPKSARTGKAGTR) is disordered. Residues 227–245 (RRAKPPHPKSARTGKAGTR) show a composition bias toward basic residues.

This sequence belongs to the methyltransferase superfamily. RNA methyltransferase RsmG family.

It localises to the cytoplasm. In terms of biological role, specifically methylates the N7 position of guanine in position 518 of 16S rRNA. This Mycobacterium avium (strain 104) protein is Ribosomal RNA small subunit methyltransferase G.